A 205-amino-acid polypeptide reads, in one-letter code: Proteasome subunit beta type-3 (205 aa).

Position 2 is an N-acetylserine (Ser-2). Lys-77 carries the post-translational modification N6-acetyllysine.

This sequence belongs to the peptidase T1B family. The 26S proteasome consists of a 20S proteasome core and two 19S regulatory subunits. The 20S proteasome core is a barrel-shaped complex made of 28 subunits that are arranged in four stacked rings. The two outer rings are each formed by seven alpha subunits, and the two inner rings are formed by seven beta subunits. The proteolytic activity is exerted by three beta-subunits PSMB5, PSMB6 and PSMB7. As to expression, detected in liver (at protein level).

Its subcellular location is the cytoplasm. It is found in the nucleus. Its function is as follows. Non-catalytic component of the 20S core proteasome complex involved in the proteolytic degradation of most intracellular proteins. This complex plays numerous essential roles within the cell by associating with different regulatory particles. Associated with two 19S regulatory particles, forms the 26S proteasome and thus participates in the ATP-dependent degradation of ubiquitinated proteins. The 26S proteasome plays a key role in the maintenance of protein homeostasis by removing misfolded or damaged proteins that could impair cellular functions, and by removing proteins whose functions are no longer required. Associated with the PA200 or PA28, the 20S proteasome mediates ubiquitin-independent protein degradation. This type of proteolysis is required in several pathways including spermatogenesis (20S-PA200 complex) or generation of a subset of MHC class I-presented antigenic peptides (20S-PA28 complex). In Mus musculus (Mouse), this protein is Proteasome subunit beta type-3 (Psmb3).